The primary structure comprises 297 residues: Adrenocorticotropic hormone receptor (297 aa).

The Extracellular segment spans residues 1 to 23 (MKHIITPYEHTNDTARNNSDCPD). 2 N-linked (GlcNAc...) asparagine glycosylation sites follow: N12 and N17. 2 disulfide bridges follow: C21-C253 and C245-C251. The chain crosses the membrane as a helical span at residues 24 to 49 (VVLPEEIFFTISIIGVLENLIVLLAV). Residues 50–58 (VKNKNLQCP) lie on the Cytoplasmic side of the membrane. The chain crosses the membrane as a helical span at residues 59-79 (MYFFICSLAISDMLGSLYKIL). The Extracellular portion of the chain corresponds to 80 to 104 (ENILIMFRNRGYLQPRGNFESTADD). Residues 105–126 (IIDCMFILSLLGSIFSLSVIAA) traverse the membrane as a helical segment. The Cytoplasmic segment spans residues 127–147 (DRYITIFHALQYHSIVTMRRT). Residues 148–168 (IITLTVIWIFCTGSGIAMVIF) form a helical membrane-spanning segment. At 169 to 180 (SHHVPTVLTFTS) the chain is on the extracellular side. Residues 181-199 (LFPLMLVFILCLYIHMFLL) traverse the membrane as a helical segment. Over 200–217 (ARSHARKISTLPRANMKG) the chain is Cytoplasmic. A helical membrane pass occupies residues 218-244 (AITLTILLGVFIFCWAPFILHVLLMTF). At 245-256 (CPNNPYCVCYMS) the chain is on the extracellular side. The chain crosses the membrane as a helical span at residues 257–278 (LFQINGMLIMCNAVIDPFIYAF). At 279–297 (RSPELRDAFKKMFSCHRYQ) the chain is on the cytoplasmic side. C293 carries the S-palmitoyl cysteine lipid modification.

It belongs to the G-protein coupled receptor 1 family. As to quaternary structure, homodimer. Interacts with corticotropin (ACTH). Interacts with MRAP; this interaction targets MC2R to the plasma membrane. Interacts with MRAP2; competing with MRAP for binding to MC2R and impairing the binding of corticotropin (ACTH). Ubiquitinated by MGRN1 that may be involved in post-endocytic trafficking and/or degradation of internalized receptor.

The protein resides in the cell membrane. Functionally, hormone receptor primarily expressed in adrenal cortex that plays a key role in regulating adrenocortical function. Upon corticotropin (ACTH) binding, facilitates the release of adrenal glucocorticoids, including cortisol and corticosterone. In addition, MC2R is required for fetal and neonatal adrenal gland development. Mechanistically, activates adenylate cyclase (cAMP), the MAPK cascade as well as the cAMP-dependent protein kinase A pathway leading to steroidogenic factor 1/NR5A1-mediated transcriptional activation. The polypeptide is Adrenocorticotropic hormone receptor (MC2R) (Mesocricetus auratus (Golden hamster)).